We begin with the raw amino-acid sequence, 163 residues long: Lipoprotein signal peptidase (163 aa).

The next 3 membrane-spanning stretches (helical) occupy residues 4 to 24 (SAALFCRPVPAILFILSLLIL), 66 to 86 (LDAWVIVVMRLAIVAFVAWLW), and 92 to 112 (DHQFAHLGYCLIIAGAFGNII). Active-site residues include Asp122 and Asp140. Residues 132–152 (SFAVFNLADSLITIGAGFILL) form a helical membrane-spanning segment.

It belongs to the peptidase A8 family.

The protein resides in the cell inner membrane. The enzyme catalyses Release of signal peptides from bacterial membrane prolipoproteins. Hydrolyzes -Xaa-Yaa-Zaa-|-(S,diacylglyceryl)Cys-, in which Xaa is hydrophobic (preferably Leu), and Yaa (Ala or Ser) and Zaa (Gly or Ala) have small, neutral side chains.. It participates in protein modification; lipoprotein biosynthesis (signal peptide cleavage). Functionally, this protein specifically catalyzes the removal of signal peptides from prolipoproteins. In Allorhizobium ampelinum (strain ATCC BAA-846 / DSM 112012 / S4) (Agrobacterium vitis (strain S4)), this protein is Lipoprotein signal peptidase.